Reading from the N-terminus, the 136-residue chain is Succinate dehydrogenase assembly factor 3, mitochondrial (136 aa).

Residues 1–24 constitute a mitochondrion transit peptide; it reads MRASMVRRMAAAASSSASSSLRPA.

This sequence belongs to the complex I LYR family. SDHAF3 subfamily. In terms of assembly, interacts with the iron-sulfur protein subunit within the SDH catalytic dimer.

It is found in the mitochondrion matrix. In terms of biological role, plays an essential role in the assembly of succinate dehydrogenase (SDH), an enzyme complex (also referred to as respiratory complex II) that is a component of both the tricarboxylic acid (TCA) cycle and the mitochondrial electron transport chain, and which couples the oxidation of succinate to fumarate with the reduction of ubiquinone (coenzyme Q) to ubiquinol. Promotes maturation of the iron-sulfur protein subunit of the SDH catalytic dimer, protecting it from the deleterious effects of oxidants. May act together with SDHAF1. This is Succinate dehydrogenase assembly factor 3, mitochondrial from Pyricularia oryzae (strain 70-15 / ATCC MYA-4617 / FGSC 8958) (Rice blast fungus).